Here is a 434-residue protein sequence, read N- to C-terminus: MDEISSMLDYLGIKSTEELFSDIPLSVRKKEIGIGSPLDEHLVLERARKYASLNSTEMLNFLGNGIYDRVIPEAVNYIISKSEFLDSYTPYQPEVSQGMLQSIFEYQSLISDLFKMDFTNASMYDGYSALGEAARMAYRINGKNKILIPESTYDSKLSVLKNYVWGLSMKIEKYKMNEEGKIDIDDLQSRIDGDTSAVVVENPNGYGVIDENVFRISEIKKESLLISYVDPISLGVLKPPGEYGSDIAIAEGQQLGIPMNFGGPLLGIMSFKADYVRKSPGRLIGESVDADGKRAFVMTLQTREQHIRRAKATSNICSNQALLTLAAGSYLSILGSSGLKKVALLTIKHSKNLAESLGNIGIEKVFDSISFSDTLFRIDKNVMLDLAKKGILGGIKLTSLIKDSKYSSGTFFTATEKTDNEKIKALVNALEVIM.

The protein belongs to the GcvP family. N-terminal subunit subfamily. As to quaternary structure, the glycine cleavage system is composed of four proteins: P, T, L and H. In this organism, the P 'protein' is a heterodimer of two subunits.

It catalyses the reaction N(6)-[(R)-lipoyl]-L-lysyl-[glycine-cleavage complex H protein] + glycine + H(+) = N(6)-[(R)-S(8)-aminomethyldihydrolipoyl]-L-lysyl-[glycine-cleavage complex H protein] + CO2. In terms of biological role, the glycine cleavage system catalyzes the degradation of glycine. The P protein binds the alpha-amino group of glycine through its pyridoxal phosphate cofactor; CO(2) is released and the remaining methylamine moiety is then transferred to the lipoamide cofactor of the H protein. The protein is Probable glycine dehydrogenase (decarboxylating) subunit 1 of Thermoplasma volcanium (strain ATCC 51530 / DSM 4299 / JCM 9571 / NBRC 15438 / GSS1).